An 89-amino-acid polypeptide reads, in one-letter code: Small ribosomal subunit protein uS15 (89 aa).

Residues 1-21 show a composition bias toward basic and acidic residues; the sequence is MSITAERKAEVIKDNARDKGD. A disordered region spans residues 1–26; the sequence is MSITAERKAEVIKDNARDKGDTGSPE.

The protein belongs to the universal ribosomal protein uS15 family. Part of the 30S ribosomal subunit. Forms a bridge to the 50S subunit in the 70S ribosome, contacting the 23S rRNA.

Functionally, one of the primary rRNA binding proteins, it binds directly to 16S rRNA where it helps nucleate assembly of the platform of the 30S subunit by binding and bridging several RNA helices of the 16S rRNA. Forms an intersubunit bridge (bridge B4) with the 23S rRNA of the 50S subunit in the ribosome. The polypeptide is Small ribosomal subunit protein uS15 (Sphingopyxis alaskensis (strain DSM 13593 / LMG 18877 / RB2256) (Sphingomonas alaskensis)).